A 107-amino-acid chain; its full sequence is Large ribosomal subunit protein uL24 (107 aa).

It belongs to the universal ribosomal protein uL24 family. In terms of assembly, part of the 50S ribosomal subunit.

In terms of biological role, one of two assembly initiator proteins, it binds directly to the 5'-end of the 23S rRNA, where it nucleates assembly of the 50S subunit. Functionally, one of the proteins that surrounds the polypeptide exit tunnel on the outside of the subunit. The protein is Large ribosomal subunit protein uL24 of Nitratidesulfovibrio vulgaris (strain ATCC 29579 / DSM 644 / CCUG 34227 / NCIMB 8303 / VKM B-1760 / Hildenborough) (Desulfovibrio vulgaris).